Here is a 412-residue protein sequence, read N- to C-terminus: Lipoyl synthase, mitochondrial (412 aa).

[4Fe-4S] cluster contacts are provided by cysteine 127, cysteine 132, cysteine 138, cysteine 159, cysteine 163, cysteine 166, and serine 375. One can recognise a Radical SAM core domain in the interval 142 to 364 (SDDEGTATAT…EKEAMDMGFL (223 aa)).

It belongs to the radical SAM superfamily. Lipoyl synthase family. Requires [4Fe-4S] cluster as cofactor.

The protein resides in the mitochondrion. The catalysed reaction is [[Fe-S] cluster scaffold protein carrying a second [4Fe-4S](2+) cluster] + N(6)-octanoyl-L-lysyl-[protein] + 2 oxidized [2Fe-2S]-[ferredoxin] + 2 S-adenosyl-L-methionine + 4 H(+) = [[Fe-S] cluster scaffold protein] + N(6)-[(R)-dihydrolipoyl]-L-lysyl-[protein] + 4 Fe(3+) + 2 hydrogen sulfide + 2 5'-deoxyadenosine + 2 L-methionine + 2 reduced [2Fe-2S]-[ferredoxin]. Its pathway is protein modification; protein lipoylation via endogenous pathway; protein N(6)-(lipoyl)lysine from octanoyl-[acyl-carrier-protein]: step 2/2. Its function is as follows. Catalyzes the radical-mediated insertion of two sulfur atoms into the C-6 and C-8 positions of the octanoyl moiety bound to the lipoyl domains of lipoate-dependent enzymes, thereby converting the octanoylated domains into lipoylated derivatives. The protein is Lipoyl synthase, mitochondrial of Leishmania infantum.